A 428-amino-acid chain; its full sequence is Kynureninase (428 aa).

Pyridoxal 5'-phosphate-binding positions include Thr-104, Thr-105, 132-135 (FPSD), Asp-213, His-216, and Tyr-238. Position 239 is an N6-(pyridoxal phosphate)lysine (Lys-239). Pyridoxal 5'-phosphate-binding residues include Trp-267 and Thr-295.

This sequence belongs to the kynureninase family. In terms of assembly, homodimer. The cofactor is pyridoxal 5'-phosphate.

The enzyme catalyses L-kynurenine + H2O = anthranilate + L-alanine + H(+). It catalyses the reaction 3-hydroxy-L-kynurenine + H2O = 3-hydroxyanthranilate + L-alanine + H(+). It functions in the pathway amino-acid degradation; L-kynurenine degradation; L-alanine and anthranilate from L-kynurenine: step 1/1. The protein operates within cofactor biosynthesis; NAD(+) biosynthesis; quinolinate from L-kynurenine: step 2/3. Catalyzes the cleavage of L-kynurenine (L-Kyn) and L-3-hydroxykynurenine (L-3OHKyn) into anthranilic acid (AA) and 3-hydroxyanthranilic acid (3-OHAA), respectively. This is Kynureninase from Geobacillus thermodenitrificans (strain NG80-2).